The chain runs to 494 residues: Prenylcysteine oxidase 1-like (494 aa).

The signal sequence occupies residues 1–22; that stretch reads MARAAPLLAALTALLAAAAAGG. N-linked (GlcNAc...) asparagine glycosylation occurs at N342.

The protein belongs to the prenylcysteine oxidase family. It depends on FAD as a cofactor.

The protein resides in the secreted. Functionally, likely to have oxidoreductase activity. Required in the mevalonate pathway to regulate prenylation and enhances the bactericidal activity of neutrophils. The sequence is that of Prenylcysteine oxidase 1-like (PCYOX1L) from Homo sapiens (Human).